Consider the following 1425-residue polypeptide: Death-associated protein kinase dapk-1 (1425 aa).

The region spanning 28–289 (YEIETELGSG…VEECLQHPWI (262 aa)) is the Protein kinase domain. ATP contacts are provided by residues 34 to 42 (LGSGQFAVV) and lysine 57. Catalysis depends on aspartate 155, which acts as the Proton acceptor. ANK repeat units lie at residues 392-421 (NGATAMHCAAKYGHAEVFNYFHMKGGNICA), 425-454 (NGDTPLHVACRFAQHTVAGYVANEKIDVDS), 458-487 (TGETALHCAVESADTRVVRLLLQLRPRLDL), 491-520 (SGDTVLHLAADSINPRIVPLLVCLAPPLHL), 524-553 (REETPLHVAAARGHVDCVQALLDANSPIDA), 557-586 (DGKTALIIALENGNVDIASILITNGCDINH), 590-619 (HGDTALHIASKHGLLQAVQTLCHCAVTVDS), 623-652 (NKKTALHLAAHYGHVDIIRVLLLARADVTL), 810-841 (GGYEPMHTCYDHFVGNADCIHLILYRTSDPTE), and 934-963 (IGMKTLKMELAKCRTNILAKLLKPLAILDT). The Roc domain occupies 695-950 (LDTSLRRIKL…MELAKCRTNI (256 aa)). The 82-residue stretch at 1308–1389 (ELACLLDPPH…DARDALYRTV (82 aa)) folds into the Death domain.

This sequence belongs to the protein kinase superfamily. CAMK Ser/Thr protein kinase family. DAP kinase subfamily. In terms of assembly, interacts with ptrn-1. The cofactor is Mg(2+). Expressed in epidermis, muscles and neurons.

Its subcellular location is the cytoplasm. The protein localises to the cytosol. It localises to the cytoskeleton. It carries out the reaction L-seryl-[protein] + ATP = O-phospho-L-seryl-[protein] + ADP + H(+). The catalysed reaction is L-threonyl-[protein] + ATP = O-phospho-L-threonyl-[protein] + ADP + H(+). In terms of biological role, negative regulator of epidermal barrier repair and innate immune responses to wounding. The role in epidermal tissue integrity and wound healing is established through the inhibition of epidermal microtubule stability, possibly via the negative regulation of the microtubule minus-end binding protein ptrn-1. In epidermis, prevents expression of specific unc-44 isoforms probably by promoting nuclear localization of pinn-1, which in turn may affect sydn-1-ssup-72-mediated regulation of alternative polyadenylation of unc-44 mRNA. Appears to act downstream of or in parallel to muscarinic signaling in the regulation of autophagy. This Caenorhabditis elegans protein is Death-associated protein kinase dapk-1.